The chain runs to 185 residues: Elongation factor P (185 aa).

It belongs to the elongation factor P family.

It is found in the cytoplasm. It participates in protein biosynthesis; polypeptide chain elongation. Involved in peptide bond synthesis. Stimulates efficient translation and peptide-bond synthesis on native or reconstituted 70S ribosomes in vitro. Probably functions indirectly by altering the affinity of the ribosome for aminoacyl-tRNA, thus increasing their reactivity as acceptors for peptidyl transferase. This is Elongation factor P from Acaryochloris marina (strain MBIC 11017).